The chain runs to 216 residues: MOB kinase activator 3C (216 aa).

Zn(2+) contacts are provided by Cys82, Cys87, His164, and His169.

Belongs to the MOB1/phocein family.

Functionally, may regulate the activity of kinases. The sequence is that of MOB kinase activator 3C (MOB3C) from Bos taurus (Bovine).